Reading from the N-terminus, the 254-residue chain is Imidazole glycerol phosphate synthase subunit HisF (254 aa).

Catalysis depends on residues Asp-11 and Asp-130.

Belongs to the HisA/HisF family. In terms of assembly, heterodimer of HisH and HisF.

The protein resides in the cytoplasm. The enzyme catalyses 5-[(5-phospho-1-deoxy-D-ribulos-1-ylimino)methylamino]-1-(5-phospho-beta-D-ribosyl)imidazole-4-carboxamide + L-glutamine = D-erythro-1-(imidazol-4-yl)glycerol 3-phosphate + 5-amino-1-(5-phospho-beta-D-ribosyl)imidazole-4-carboxamide + L-glutamate + H(+). Its pathway is amino-acid biosynthesis; L-histidine biosynthesis; L-histidine from 5-phospho-alpha-D-ribose 1-diphosphate: step 5/9. Functionally, IGPS catalyzes the conversion of PRFAR and glutamine to IGP, AICAR and glutamate. The HisF subunit catalyzes the cyclization activity that produces IGP and AICAR from PRFAR using the ammonia provided by the HisH subunit. The protein is Imidazole glycerol phosphate synthase subunit HisF of Oceanobacillus iheyensis (strain DSM 14371 / CIP 107618 / JCM 11309 / KCTC 3954 / HTE831).